Reading from the N-terminus, the 70-residue chain is Eglin C (70 aa).

It belongs to the protease inhibitor I13 (potato type I serine protease inhibitor) family.

In terms of biological role, inhibits both elastase and cathepsin G. The sequence is that of Eglin C from Hirudo medicinalis (Medicinal leech).